Consider the following 661-residue polypeptide: Fusaric acid cluster transcription factor FUB12 (661 aa).

The segment at residues 17-48 (CVPCRTRKIKCNAAVVGLPCGSCVSRECPDDC) is a DNA-binding region (zn(2)-C6 fungal-type). Disordered regions lie at residues 57–131 (TVKV…RPPG) and 151–184 (SAAQ…PQLD). The span at 73–98 (PDTNGSVLSPRQQQLPTNVSRQTTDS) shows a compositional bias: polar residues. The segment covering 99–109 (SHSDPVEESIH) has biased composition (basic and acidic residues). A compositionally biased stretch (polar residues) spans 110–119 (ASHTGSSLRN). Residues 120–129 (DTPHSRDRRP) are compositionally biased toward basic and acidic residues.

It localises to the nucleus. Its function is as follows. Efflux pump involved in export of biosynthesis of fusaric acid, a mycotoxin with low to moderate toxicity to animals and humans, but with high phytotoxic properties. Constitutes a self-protecting mechanism of the fungus against critical levels of FSA within the cell. The chain is Fusaric acid cluster transcription factor FUB12 from Fusarium oxysporum f. sp. lycopersici (strain 4287 / CBS 123668 / FGSC 9935 / NRRL 34936) (Fusarium vascular wilt of tomato).